The primary structure comprises 551 residues: Chaperonin GroEL (551 aa).

Residues Thr29–Pro32, Lys50, Asp86–Thr90, Gly417, and Asp499 contribute to the ATP site.

Belongs to the chaperonin (HSP60) family. Forms a cylinder of 14 subunits composed of two heptameric rings stacked back-to-back. Interacts with the co-chaperonin GroES.

Its subcellular location is the cytoplasm. The enzyme catalyses ATP + H2O + a folded polypeptide = ADP + phosphate + an unfolded polypeptide.. Functionally, together with its co-chaperonin GroES, plays an essential role in assisting protein folding. The GroEL-GroES system forms a nano-cage that allows encapsulation of the non-native substrate proteins and provides a physical environment optimized to promote and accelerate protein folding. In Ehrlichia ruminantium (strain Gardel), this protein is Chaperonin GroEL.